The primary structure comprises 340 residues: GTPase Obg (340 aa).

In terms of domain architecture, Obg spans 1-159 (MGFIDEVKLC…KHVLLKLKVL (159 aa)). Positions 160-329 (SDVGIIGMPN…LSEKLKKSNS (170 aa)) constitute an OBG-type G domain. Residues 166–173 (GMPNAGKS), 191–195 (FTTVR), 212–215 (DIPG), 279–282 (NKCD), and 310–312 (NGD) each bind GTP. The Mg(2+) site is built by S173 and T193.

The protein belongs to the TRAFAC class OBG-HflX-like GTPase superfamily. OBG GTPase family. As to quaternary structure, monomer. Requires Mg(2+) as cofactor.

The protein resides in the cytoplasm. An essential GTPase which binds GTP, GDP and possibly (p)ppGpp with moderate affinity, with high nucleotide exchange rates and a fairly low GTP hydrolysis rate. Plays a role in control of the cell cycle, stress response, ribosome biogenesis and in those bacteria that undergo differentiation, in morphogenesis control. This Wolbachia sp. subsp. Drosophila simulans (strain wRi) protein is GTPase Obg.